Consider the following 181-residue polypeptide: MKNNSIRTVVATGIGAALFIIIGMFVNIPIFGNTSIQLQYAVQALFSVIFGPITGFFMGFIGHALKDGIQYGNISWAWVLASGITGLVIGLFGKKYDVTMGKFSVMSMIWFNLAQALGLLIAYGVVTPIGDKIQFAQAWSYLYAQSFVAGVANFITIAIGGTLLLAIYASSRTQSGSLTKD.

A run of 5 helical transmembrane segments spans residues 11–31 (ATGIGAALFIIIGMFVNIPIF), 45–65 (LFSVIFGPITGFFMGFIGHAL), 72–92 (GNISWAWVLASGITGLVIGLF), 109–129 (IWFNLAQALGLLIAYGVVTPI), and 147–167 (FVAGVANFITIAIGGTLLLAI).

It belongs to the UPF0397 family.

The protein localises to the cell membrane. The protein is UPF0397 protein str0306 of Streptococcus thermophilus (strain CNRZ 1066).